The sequence spans 1059 residues: Mitogen-activated protein kinase kinase kinase mlk-1 (1059 aa).

The disordered stretch occupies residues 1–66 (MEQASVPSYV…ESSQVSRESP (66 aa)). Residues 38 to 48 (DTTTASTSTDS) show a composition bias toward low complexity. The SH3 domain maps to 69–130 (RASKAFVASY…PSNYAREVTY (62 aa)). Residues 150–454 (TLSDCQIGHG…TLAISFKQYA (305 aa)) enclose the Protein kinase domain. Residues 156–164 (IGHGATATV) and lysine 193 each bind ATP. The stretch at 199–224 (ASNFRADVVSTDEQLEQLKREANLVN) forms a coiled coil. Aspartate 297 serves as the catalytic Proton acceptor. A Phosphoserine; by max-2 and tpa-1 modification is found at serine 355. 2 disordered regions span residues 617–699 (PVVS…QTTR) and 714–808 (RAQS…SSSD). A compositionally biased stretch (polar residues) spans 623–633 (MDDSNTFSTID). Basic and acidic residues-rich tracts occupy residues 639-648 (DPNHSKESKK) and 662-674 (NKRDSKEDHDERA). Low complexity predominate over residues 678-689 (SISSRSSSTTSS). A compositionally biased stretch (polar residues) spans 690–699 (NRLITGQTTR). A compositionally biased stretch (basic and acidic residues) spans 749 to 759 (RYVKDLEKDTP). Composition is skewed to polar residues over residues 774-790 (LDQTIPASPNSPDSINN) and 798-808 (SRRTTANSSSD). An NPQY motif motif is present at residues 937-940 (NPQY). At tyrosine 940 the chain carries Phosphotyrosine.

This sequence belongs to the protein kinase superfamily. STE Ser/Thr protein kinase family. MAP kinase kinase kinase subfamily. Interacts with max-2; the interaction is independent of max-2 and mlk-1 kinase activities. May interact (via NPQY motif when phosphorylated on tyrosine residue) with shc-1 (via PID domain); the interaction may facilitate mek-1 phosphorylation by bringing mlk-1 and mek-1 together. Interacts with svh-2 (via cytoplasmic domain). Interacts with tpa-1. Mg(2+) is required as a cofactor. In terms of processing, may be phosphorylated on tyrosine residues by svh-2. May be ubiquitinated and targeted for proteasomal degradation by E3 ubiquitin ligase rpm-1. In terms of tissue distribution, expressed in pharynx, intestine, hypodermis, neurons and body muscles.

The catalysed reaction is L-seryl-[protein] + ATP = O-phospho-L-seryl-[protein] + ADP + H(+). It carries out the reaction L-threonyl-[protein] + ATP = O-phospho-L-threonyl-[protein] + ADP + H(+). Activated by phosphorylation at Ser-355. May be activated by svh-2-mediated phosphorylation. Functionally, serine/threonine-protein kinase which, by phosphorylating and activating mek-1, plays an important role in the activation of the JNK pathway composed of mlk-1, mek-1 and kgb-1. Involved in the response to environmental stress such as heavy metals. By activating the JNK pathway downstream of tyrosine receptor svh-2, plays a role in axon regeneration after injury. The sequence is that of Mitogen-activated protein kinase kinase kinase mlk-1 from Caenorhabditis elegans.